A 146-amino-acid polypeptide reads, in one-letter code: Large ribosomal subunit protein uL15 (146 aa).

A disordered region spans residues methionine 1 to arginine 46. Residues lysine 9 to glycine 19 show a composition bias toward basic residues. A compositionally biased stretch (gly residues) spans arginine 20 to serine 30.

The protein belongs to the universal ribosomal protein uL15 family. Part of the 50S ribosomal subunit.

Functionally, binds to the 23S rRNA. The chain is Large ribosomal subunit protein uL15 from Phytoplasma mali (strain AT).